Consider the following 746-residue polypeptide: Eukaryotic translation initiation factor 3 subunit B (746 aa).

A compositionally biased stretch (basic and acidic residues) spans 1–11 (MAPSYEHLREA). Positions 1-20 (MAPSYEHLREADLDEDEFDE) are disordered. The RRM domain maps to 42–128 (TFVVIDGLPE…HTLRVNKLMD (87 aa)). WD repeat units lie at residues 195–234 (DRPNWTESFVQWSPLGTYLLSMHMQGVQLWGGPKWDRLGR), 247–294 (PQEN…RSFA), 307–346 (PRKHPWPAFKWSSDDKYVARLTQGQSISVYELPRMNLLDK), 349–386 (IKVEGVQDFEWAPSRPQRDGVKTYEQMFCYWTPEIGSN), 458–500 (TIKD…FFCP), 517–560 (LDKR…EKPE), and 575–620 (ADHY…LREE).

It belongs to the eIF-3 subunit B family. Component of the eukaryotic translation initiation factor 3 (eIF-3) complex.

It is found in the cytoplasm. In terms of biological role, RNA-binding component of the eukaryotic translation initiation factor 3 (eIF-3) complex, which is involved in protein synthesis of a specialized repertoire of mRNAs and, together with other initiation factors, stimulates binding of mRNA and methionyl-tRNAi to the 40S ribosome. The eIF-3 complex specifically targets and initiates translation of a subset of mRNAs involved in cell proliferation. The polypeptide is Eukaryotic translation initiation factor 3 subunit B (Pyricularia oryzae (strain 70-15 / ATCC MYA-4617 / FGSC 8958) (Rice blast fungus)).